The primary structure comprises 434 residues: Cobyrinate a,c-diamide synthase (434 aa).

Residues lysine 240 to arginine 430 form the GATase cobBQ-type domain. Cysteine 322 functions as the Nucleophile in the catalytic mechanism.

The protein belongs to the CobB/CbiA family. It depends on Mg(2+) as a cofactor.

It carries out the reaction cob(II)yrinate + 2 L-glutamine + 2 ATP + 2 H2O = cob(II)yrinate a,c diamide + 2 L-glutamate + 2 ADP + 2 phosphate + 2 H(+). The protein operates within cofactor biosynthesis; adenosylcobalamin biosynthesis; cob(II)yrinate a,c-diamide from sirohydrochlorin (anaerobic route): step 10/10. Catalyzes the ATP-dependent amidation of the two carboxylate groups at positions a and c of cobyrinate, using either L-glutamine or ammonia as the nitrogen source. This is Cobyrinate a,c-diamide synthase from Sulfolobus acidocaldarius (strain ATCC 33909 / DSM 639 / JCM 8929 / NBRC 15157 / NCIMB 11770).